The sequence spans 242 residues: Large ribosomal subunit protein uL3 (242 aa).

Residues 131–165 (GRATHGNSVSHRTHGSTGQRQDPGKVFKGKKMAGH) are disordered. The span at 135-150 (HGNSVSHRTHGSTGQR) shows a compositional bias: polar residues. Q151 is subject to N5-methylglutamine.

The protein belongs to the universal ribosomal protein uL3 family. In terms of assembly, part of the 50S ribosomal subunit. Forms a cluster with proteins L14 and L19. Methylated by PrmB.

Functionally, one of the primary rRNA binding proteins, it binds directly near the 3'-end of the 23S rRNA, where it nucleates assembly of the 50S subunit. The sequence is that of Large ribosomal subunit protein uL3 from Chelativorans sp. (strain BNC1).